The sequence spans 417 residues: Gamma-glutamyl phosphate reductase (417 aa).

It belongs to the gamma-glutamyl phosphate reductase family.

It localises to the cytoplasm. The catalysed reaction is L-glutamate 5-semialdehyde + phosphate + NADP(+) = L-glutamyl 5-phosphate + NADPH + H(+). It functions in the pathway amino-acid biosynthesis; L-proline biosynthesis; L-glutamate 5-semialdehyde from L-glutamate: step 2/2. In terms of biological role, catalyzes the NADPH-dependent reduction of L-glutamate 5-phosphate into L-glutamate 5-semialdehyde and phosphate. The product spontaneously undergoes cyclization to form 1-pyrroline-5-carboxylate. This Escherichia coli O17:K52:H18 (strain UMN026 / ExPEC) protein is Gamma-glutamyl phosphate reductase.